Reading from the N-terminus, the 343-residue chain is Ribosomal RNA small subunit methyltransferase C (343 aa).

It belongs to the methyltransferase superfamily. RsmC family. In terms of assembly, monomer.

It is found in the cytoplasm. The enzyme catalyses guanosine(1207) in 16S rRNA + S-adenosyl-L-methionine = N(2)-methylguanosine(1207) in 16S rRNA + S-adenosyl-L-homocysteine + H(+). In terms of biological role, specifically methylates the guanine in position 1207 of 16S rRNA in the 30S particle. This is Ribosomal RNA small subunit methyltransferase C from Escherichia coli O8 (strain IAI1).